A 430-amino-acid polypeptide reads, in one-letter code: Proteasome-activating nucleotidase (430 aa).

A coiled-coil region spans residues 9-89 (TELKKEKKAF…LRRELDRMRV (81 aa)). ATP-binding positions include 214–219 (GTGKTL) and H353. The segment at 428–430 (LYR) is docks into pockets in the proteasome alpha-ring to cause gate opening.

Belongs to the AAA ATPase family. Homohexamer. The hexameric complex has a two-ring architecture resembling a top hat that caps the 20S proteasome core at one or both ends. Alone, can form a complex composed of two stacked hexameric rings in vitro. Upon ATP-binding, the C-terminus of PAN interacts with the alpha-rings of the proteasome core by binding to the intersubunit pockets.

The protein localises to the cytoplasm. With respect to regulation, ATPase activity is inhibited by EDTA, N-ethylmaleimide (NEM) and p-chloromercuriphenyl-sulfonic acid (PCMS) in vitro. Its function is as follows. ATPase which is responsible for recognizing, binding, unfolding and translocation of substrate proteins into the archaeal 20S proteasome core particle. Is essential for opening the gate of the 20S proteasome via an interaction with its C-terminus, thereby allowing substrate entry and access to the site of proteolysis. Thus, the C-termini of the proteasomal ATPase function like a 'key in a lock' to induce gate opening and therefore regulate proteolysis. Unfolding activity requires energy from ATP hydrolysis, whereas ATP binding alone promotes ATPase-20S proteasome association which triggers gate opening, and supports translocation of unfolded substrates. In addition to ATP, is able to cleave other nucleotide triphosphates such as CTP, GTP and UTP, but hydrolysis of these other nucleotides is less effective in promoting proteolysis than ATP. Moreover, PAN by itself can function as a chaperone in vitro. This is Proteasome-activating nucleotidase from Methanocaldococcus jannaschii (strain ATCC 43067 / DSM 2661 / JAL-1 / JCM 10045 / NBRC 100440) (Methanococcus jannaschii).